Here is a 337-residue protein sequence, read N- to C-terminus: Transaldolase (337 aa).

A Nuclear localization signal motif is present at residues M1–R10. The residue at position 115 (K115) is an N6-acetyllysine. Catalysis depends on K142, which acts as the Schiff-base intermediate with substrate. K219 bears the N6-acetyllysine mark. Phosphoserine occurs at positions 237 and 256. N6-acetyllysine occurs at positions 269, 286, and 321.

The protein belongs to the transaldolase family. Type 1 subfamily. In terms of assembly, homodimer. Heterodimer with isoform 2. Interacts with KPNA1 and KPNA4.

The protein localises to the nucleus. Its subcellular location is the cytoplasm. It carries out the reaction D-sedoheptulose 7-phosphate + D-glyceraldehyde 3-phosphate = D-erythrose 4-phosphate + beta-D-fructose 6-phosphate. The protein operates within carbohydrate degradation; pentose phosphate pathway; D-glyceraldehyde 3-phosphate and beta-D-fructose 6-phosphate from D-ribose 5-phosphate and D-xylulose 5-phosphate (non-oxidative stage): step 2/3. Functionally, catalyzes the rate-limiting step of the non-oxidative phase in the pentose phosphate pathway. Catalyzes the reversible conversion of sedheptulose-7-phosphate and D-glyceraldehyde 3-phosphate into erythrose-4-phosphate and beta-D-fructose 6-phosphate. Not only acts as a pentose phosphate pathway enzyme, but also affects other metabolite pathways by altering its subcellular localization between the nucleus and the cytoplasm. The sequence is that of Transaldolase from Homo sapiens (Human).